The chain runs to 122 residues: Large ribosomal subunit protein uL14 (122 aa).

It belongs to the universal ribosomal protein uL14 family. As to quaternary structure, part of the 50S ribosomal subunit. Forms a cluster with proteins L3 and L19. In the 70S ribosome, L14 and L19 interact and together make contacts with the 16S rRNA in bridges B5 and B8.

Binds to 23S rRNA. Forms part of two intersubunit bridges in the 70S ribosome. The protein is Large ribosomal subunit protein uL14 of Nitrosomonas europaea (strain ATCC 19718 / CIP 103999 / KCTC 2705 / NBRC 14298).